The following is a 107-amino-acid chain: Ig kappa chain V-VI region NQ5-78.2.6 (107 aa).

The tract at residues 1 to 23 (QILLTQSPAIMSASPGQKVTMTC) is framework-1. An intrachain disulfide couples Cys23 to Cys87. The tract at residues 24–33 (SASSSVSYMH) is complementarity-determining-1. The segment at 34-48 (WYQQKSGTSPKRWIY) is framework-2. Positions 49-55 (DTSKLAS) are complementarity-determining-2. The interval 56 to 87 (GVPARFXGSGSATSYSLTITSMQAEDAATYYC) is framework-3. Residues 88–96 (QQWSSNPLT) are complementarity-determining-3. The interval 97-106 (FGSGTKLEXK) is framework-4.

Functionally, anti-2-phenyl oxazolone (PHOX) Antibody. The protein is Ig kappa chain V-VI region NQ5-78.2.6 of Mus musculus (Mouse).